The chain runs to 224 residues: MHNLVINDLPEEGLPTALFEPSELIDFKIAWDWQRKWQEKLLAEPSNKQAVWMLEHFDCYTLGRGASEDNLLFDVEKPPIDFYRIDRGGDVTHHLPGQLVVYLVLDLRRYKTDLDWYLRQLENVLLDVLDGLGLNGYRINGMTGVWCNGKKVASIGISCRRWITQHGIALNVDCDLLGFNQIVPCGLKDYQTGRLNSWLPKLQMKEVRFLMKKSLNKRFGLLWI.

The BPL/LPL catalytic domain maps to 45–223; that stretch reads PSNKQAVWML…SLNKRFGLLW (179 aa). Residues 87 to 94, 154 to 156, and 167 to 169 contribute to the substrate site; these read RGGDVTHH, SIG, and GIA. C185 (acyl-thioester intermediate) is an active-site residue.

Belongs to the LipB family.

Its subcellular location is the cytoplasm. It catalyses the reaction octanoyl-[ACP] + L-lysyl-[protein] = N(6)-octanoyl-L-lysyl-[protein] + holo-[ACP] + H(+). Its pathway is protein modification; protein lipoylation via endogenous pathway; protein N(6)-(lipoyl)lysine from octanoyl-[acyl-carrier-protein]: step 1/2. Its function is as follows. Catalyzes the transfer of endogenously produced octanoic acid from octanoyl-acyl-carrier-protein onto the lipoyl domains of lipoate-dependent enzymes. Lipoyl-ACP can also act as a substrate although octanoyl-ACP is likely to be the physiological substrate. The chain is Octanoyltransferase from Prochlorococcus marinus (strain SARG / CCMP1375 / SS120).